A 58-amino-acid polypeptide reads, in one-letter code: Large ribosomal subunit protein eL37 (58 aa).

4 residues coordinate Zn(2+): Cys20, Cys23, Cys35, and Cys38. A C4-type zinc finger spans residues 20 to 38 (CRRCGEKSYHTKKKVCSSC).

It belongs to the eukaryotic ribosomal protein eL37 family. The cofactor is Zn(2+).

Binds to the 23S rRNA. The sequence is that of Large ribosomal subunit protein eL37 from Haloquadratum walsbyi (strain DSM 16790 / HBSQ001).